The sequence spans 1125 residues: Exportin-6 (1125 aa).

Position 2 is an N-acetylalanine (alanine 2). The Importin N-terminal domain occupies isoleucine 31–alanine 97. At serine 199 the chain carries Phosphoserine. 2 positions are modified to phosphothreonine: threonine 201 and threonine 204. Phosphoserine is present on residues serine 208 and serine 224.

Belongs to the exportin family. Found in a complex with XPO6, Ran, ACTB and PFN1. Interacts with ACTB. Interacts with ACTB in a RanGTP-dependent manner.

It is found in the nucleus. The protein localises to the cytoplasm. Mediates the nuclear export of actin and profilin-actin complexes in somatic cells. The chain is Exportin-6 (Xpo6) from Mus musculus (Mouse).